The sequence spans 290 residues: Hsp70 nucleotide exchange factor FES1 (290 aa).

Ser12 is modified (phosphoserine). ARM repeat units lie at residues 13-57 (QGDK…NPEV), 76-116 (LDNA…TAVQ), 120-161 (DSQN…NLIR), 164-205 (KDIS…AYLS), 211-251 (ENII…HLIS), and 253-290 (GIKF…KYVL).

Belongs to the FES1 family. Interacts with the Hsp70 chaperones SSA1 and SSB1.

It is found in the cytoplasm. Involved in protein translation, propagation of [PSI+] prions, and polyamine tolerance. Functions as a nucleotide exchange factor (NEF), which accelerates the release of ADP, for the cytosolic Hsp70 chaperone SSA1 and the ribosome-associated Hsp70 chaperone SSB1. Required for fully efficient Hsp70-mediated folding of proteins. This chain is Hsp70 nucleotide exchange factor FES1 (FES1), found in Saccharomyces cerevisiae (strain ATCC 204508 / S288c) (Baker's yeast).